We begin with the raw amino-acid sequence, 308 residues long: Low density lipoprotein receptor adapter protein 1 (308 aa).

An N-acetylmethionine modification is found at methionine 1. Residue serine 14 is modified to Phosphoserine. The 155-residue stretch at 41-195 folds into the PID domain; the sequence is LLEGMVFSLK…QEGGDVPGTR (155 aa). The disordered stretch occupies residues 179 to 201; it reads EKREKANQEGGDVPGTRRDSTPS. Phosphoserine is present on residues serine 198 and serine 201. Positions 211-215 match the Clathrin box motif; the sequence is LLDLE. Positions 248 to 275 are AP-2 complex binding; sequence WELDDGLDEAFSRLAQSRTNPQVLDTGL. Residues 256 to 265 carry the [DE]-X(1,2)-F-X-X-[FL]-X-X-X-R motif motif; that stretch reads EAFSRLAQSR. Residues 288-308 form a disordered region; the sequence is PTDWDKPDSSGIDQDDDVFTF.

In terms of assembly, interacts (via PID domain) with LDLR (via NPXY motif). Binds to soluble clathrin trimers. Interacts with AP2B1; the interaction mediates the association with the AP-2 complex. Interacts with VLDLR. Interacts with LRP2.

It is found in the cytoplasm. Functionally, adapter protein (clathrin-associated sorting protein (CLASP)) required for efficient endocytosis of the LDL receptor (LDLR) in polarized cells such as hepatocytes and lymphocytes, but not in non-polarized cells (fibroblasts). May be required for LDL binding and internalization but not for receptor clustering in coated pits. May facilitate the endocytosis of LDLR and LDLR-LDL complexes from coated pits by stabilizing the interaction between the receptor and the structural components of the pits. May also be involved in the internalization of other LDLR family members. Binds to phosphoinositides, which regulate clathrin bud assembly at the cell surface. Required for trafficking of LRP2 to the endocytic recycling compartment which is necessary for LRP2 proteolysis, releasing a tail fragment which translocates to the nucleus and mediates transcriptional repression. The chain is Low density lipoprotein receptor adapter protein 1 from Mus musculus (Mouse).